The chain runs to 215 residues: Pyrrolidone-carboxylate peptidase (215 aa).

Residues E81, C144, and H168 contribute to the active site.

It belongs to the peptidase C15 family. In terms of assembly, homotetramer.

The protein localises to the cytoplasm. The enzyme catalyses Release of an N-terminal pyroglutamyl group from a polypeptide, the second amino acid generally not being Pro.. Removes 5-oxoproline from various penultimate amino acid residues except L-proline. The sequence is that of Pyrrolidone-carboxylate peptidase (pcp) from Bacillus amyloliquefaciens (Bacillus velezensis).